Here is a 427-residue protein sequence, read N- to C-terminus: Gamma-glutamyl phosphate reductase (427 aa).

The protein belongs to the gamma-glutamyl phosphate reductase family.

Its subcellular location is the cytoplasm. The enzyme catalyses L-glutamate 5-semialdehyde + phosphate + NADP(+) = L-glutamyl 5-phosphate + NADPH + H(+). It participates in amino-acid biosynthesis; L-proline biosynthesis; L-glutamate 5-semialdehyde from L-glutamate: step 2/2. Functionally, catalyzes the NADPH-dependent reduction of L-glutamate 5-phosphate into L-glutamate 5-semialdehyde and phosphate. The product spontaneously undergoes cyclization to form 1-pyrroline-5-carboxylate. The polypeptide is Gamma-glutamyl phosphate reductase (Rhodospirillum rubrum (strain ATCC 11170 / ATH 1.1.1 / DSM 467 / LMG 4362 / NCIMB 8255 / S1)).